Here is a 150-residue protein sequence, read N- to C-terminus: uncharacterized protein (150 aa).

A signal peptide spans 1 to 21 (MAMEMAMMGLLGTVVGASAMG).

This is an uncharacterized protein from Mycobacterium tuberculosis (strain CDC 1551 / Oshkosh).